We begin with the raw amino-acid sequence, 337 residues long: Transaldolase (337 aa).

Residues 1–10 (MSGSPVKRQR) carry the Nuclear localization signal motif. Residue K115 is modified to N6-acetyllysine. The active-site Schiff-base intermediate with substrate is the K142. Residue K219 is modified to N6-acetyllysine. A phosphoserine mark is found at S237 and S256. Residues K269, K286, and K321 each carry the N6-acetyllysine modification.

Belongs to the transaldolase family. Type 1 subfamily. In terms of assembly, homodimer. Interacts with KPNA1 and KPNA4.

It localises to the nucleus. The protein resides in the cytoplasm. The enzyme catalyses D-sedoheptulose 7-phosphate + D-glyceraldehyde 3-phosphate = D-erythrose 4-phosphate + beta-D-fructose 6-phosphate. The protein operates within carbohydrate degradation; pentose phosphate pathway; D-glyceraldehyde 3-phosphate and beta-D-fructose 6-phosphate from D-ribose 5-phosphate and D-xylulose 5-phosphate (non-oxidative stage): step 2/3. In terms of biological role, catalyzes the rate-limiting step of the non-oxidative phase in the pentose phosphate pathway. Catalyzes the reversible conversion of sedheptulose-7-phosphate and D-glyceraldehyde 3-phosphate into erythrose-4-phosphate and beta-D-fructose 6-phosphate. This is Transaldolase (TALDO1) from Cricetulus griseus (Chinese hamster).